Reading from the N-terminus, the 233-residue chain is Endonuclease V (233 aa).

Mg(2+) is bound by residues aspartate 48 and aspartate 116.

It belongs to the endonuclease V family. Mg(2+) is required as a cofactor.

It is found in the cytoplasm. It catalyses the reaction Endonucleolytic cleavage at apurinic or apyrimidinic sites to products with a 5'-phosphate.. Its function is as follows. DNA repair enzyme involved in the repair of deaminated bases. Selectively cleaves double-stranded DNA at the second phosphodiester bond 3' to a deoxyinosine leaving behind the intact lesion on the nicked DNA. In Streptomyces coelicolor (strain ATCC BAA-471 / A3(2) / M145), this protein is Endonuclease V.